A 261-amino-acid polypeptide reads, in one-letter code: Malonyl-[acyl-carrier protein] O-methyltransferase (261 aa).

Belongs to the methyltransferase superfamily.

The enzyme catalyses malonyl-[ACP] + S-adenosyl-L-methionine = malonyl-[ACP] methyl ester + S-adenosyl-L-homocysteine. Its pathway is cofactor biosynthesis; biotin biosynthesis. Functionally, converts the free carboxyl group of a malonyl-thioester to its methyl ester by transfer of a methyl group from S-adenosyl-L-methionine (SAM). It allows to synthesize pimeloyl-ACP via the fatty acid synthetic pathway. The protein is Malonyl-[acyl-carrier protein] O-methyltransferase of Bacteroides thetaiotaomicron (strain ATCC 29148 / DSM 2079 / JCM 5827 / CCUG 10774 / NCTC 10582 / VPI-5482 / E50).